We begin with the raw amino-acid sequence, 294 residues long: Cutinase (294 aa).

The signal sequence occupies residues 1–33; that stretch reads MLRARPSHRLASAAAVVAATGAALLAGSSPAAA. Residues Cys36 and Cys107 are joined by a disulfide bond. Catalysis depends on Ser118, which acts as the Nucleophile. The cysteines at positions 180 and 187 are disulfide-linked. Residue Asp184 is part of the active site. His198 acts as the Proton donor/acceptor in catalysis. The segment at 222 to 241 is disordered; that stretch reads GTPTTPTPTPTPTPVPTTCV. A compositionally biased stretch (pro residues) spans 226 to 236; that stretch reads TPTPTPTPTPV. Positions 240–294 are may be involved in substrate binding; the sequence is CVRDSTRDHVAADRAVSLYGRAYARGSRDSLGATSSYNVVSLQQVEGGWRLVTAC.

Belongs to the cutinase family.

It localises to the secreted. It carries out the reaction cutin + H2O = cutin monomers.. It catalyses the reaction a tetradecanoate ester + H2O = an aliphatic alcohol + tetradecanoate + H(+). The enzyme catalyses hexadecanoate ester + H2O = an aliphatic alcohol + hexadecanoate + H(+). The catalysed reaction is a butanoate ester + H2O = an aliphatic alcohol + butanoate + H(+). It carries out the reaction an octanoate ester + H2O = an aliphatic alcohol + octanoate + H(+). In terms of biological role, catalyzes the hydrolysis of cutin, a polyester that forms the structure of plant cuticle. Shows esterase activity towards p-nitrophenol-linked aliphatic esters (pNP-aliphatic esters). Can depolymerize synthetic polyesters such as poly(epsilon-caprolactone) (PCL) and poly(1,3-propylene adipate) (PPA). Exhibits some activity on poly(lactic acid) (PLA). Can bind but not hydrolyze poly(hydroxybutyrate) (PHB). In Kineococcus radiotolerans (strain ATCC BAA-149 / DSM 14245 / SRS30216), this protein is Cutinase.